The sequence spans 246 residues: Probable transcriptional regulatory protein RB5500 (246 aa).

Belongs to the TACO1 family.

Its subcellular location is the cytoplasm. The sequence is that of Probable transcriptional regulatory protein RB5500 from Rhodopirellula baltica (strain DSM 10527 / NCIMB 13988 / SH1).